The primary structure comprises 636 residues: p-hydroxybenzoate-m-hydroxylase A (636 aa).

Residues 10–39 (DIVI…HIDN), 241–243 (RLY), Y289, and D310 each bind FAD. Residues 11–28 (IVIVGAGPVGIVLSLCMS) traverse the membrane as a helical segment.

The protein belongs to the PheA/TfdB FAD monooxygenase family. FAD serves as cofactor.

The protein resides in the membrane. The catalysed reaction is 4-hydroxybenzoate + NADH + O2 + H(+) = 3,4-dihydroxybenzoate + NAD(+) + H2O. It catalyses the reaction 4-hydroxybenzoate + NADPH + O2 + H(+) = 3,4-dihydroxybenzoate + NADP(+) + H2O. FAD-dependent monooxygenase; part of the benzoic acid degradation pathway also known as the protocatechuic acid pathway. Benzoic acid debradation begins with the conversion of benzoic acid into 4-hydroxybenzoic acid through hydroxylation by the benzoate-4-monooxygenase bphA, and its partner NADPH-cytochrome P450 reductase cprA which act as a mediator in electron donation from NADPH. 4-Hydroxybenzoic acid is then converted into 3,4-dihydroxybenzoic acid (also called protocatechuic acid) by the p-hydroxybenzoate-m-hydroxylase phhA. Protocatechuic acid is converted into 3-carboxy-cis,cis-muconic acid by the intradiol ring-cleavage dioxygenase prcA, which is further metabolized through the 3-oxoadipate pathway to finally enter the tricarboxylic acid cycle (TCA). In Aspergillus niger (strain ATCC MYA-4892 / CBS 513.88 / FGSC A1513), this protein is p-hydroxybenzoate-m-hydroxylase A.